The chain runs to 352 residues: Ferredoxin--NADP reductase 2 (352 aa).

Residues Glu-36, Lys-44, Tyr-48, Ile-88, Leu-123, Asp-290, and Ser-331 each coordinate FAD.

This sequence belongs to the ferredoxin--NADP reductase type 2 family. As to quaternary structure, homodimer. It depends on FAD as a cofactor.

It catalyses the reaction 2 reduced [2Fe-2S]-[ferredoxin] + NADP(+) + H(+) = 2 oxidized [2Fe-2S]-[ferredoxin] + NADPH. The chain is Ferredoxin--NADP reductase 2 from Exiguobacterium sibiricum (strain DSM 17290 / CCUG 55495 / CIP 109462 / JCM 13490 / 255-15).